The sequence spans 315 residues: Thioredoxin reductase (315 aa).

34–41 provides a ligand contact to FAD; the sequence is EGQKVGGQ. Residues cysteine 134 and cysteine 137 are joined by a disulfide bond. An FAD-binding site is contributed by 282–291; that stretch reads DIRVKSLRQV.

This sequence belongs to the class-II pyridine nucleotide-disulfide oxidoreductase family. As to quaternary structure, homodimer. FAD is required as a cofactor.

Its subcellular location is the cytoplasm. It catalyses the reaction [thioredoxin]-dithiol + NADP(+) = [thioredoxin]-disulfide + NADPH + H(+). The sequence is that of Thioredoxin reductase (trxB) from Peptoclostridium acidaminophilum (Eubacterium acidaminophilum).